We begin with the raw amino-acid sequence, 124 residues long: Large ribosomal subunit protein bL12 (124 aa).

Belongs to the bacterial ribosomal protein bL12 family. Homodimer. Part of the ribosomal stalk of the 50S ribosomal subunit. Forms a multimeric L10(L12)X complex, where L10 forms an elongated spine to which 2 to 4 L12 dimers bind in a sequential fashion. Binds GTP-bound translation factors.

In terms of biological role, forms part of the ribosomal stalk which helps the ribosome interact with GTP-bound translation factors. Is thus essential for accurate translation. In Campylobacter fetus subsp. fetus (strain 82-40), this protein is Large ribosomal subunit protein bL12.